The chain runs to 409 residues: Glutamyl-tRNA reductase (409 aa).

Residues 48–51 (TCNR), serine 89, 94–96 (ENE), and glutamine 100 each bind substrate. Catalysis depends on cysteine 49, which acts as the Nucleophile. Position 165–170 (165–170 (GNGMLA)) interacts with NADP(+).

The protein belongs to the glutamyl-tRNA reductase family. In terms of assembly, homodimer.

The catalysed reaction is (S)-4-amino-5-oxopentanoate + tRNA(Glu) + NADP(+) = L-glutamyl-tRNA(Glu) + NADPH + H(+). It functions in the pathway porphyrin-containing compound metabolism; protoporphyrin-IX biosynthesis; 5-aminolevulinate from L-glutamyl-tRNA(Glu): step 1/2. Functionally, catalyzes the NADPH-dependent reduction of glutamyl-tRNA(Glu) to glutamate 1-semialdehyde (GSA). The chain is Glutamyl-tRNA reductase from Thermoplasma volcanium (strain ATCC 51530 / DSM 4299 / JCM 9571 / NBRC 15438 / GSS1).